Reading from the N-terminus, the 394-residue chain is uncharacterized protein (394 aa).

Residues asparagine 3, asparagine 14, asparagine 20, and asparagine 25 are each glycosylated (N-linked (GlcNAc...) asparagine). Helical transmembrane passes span 64 to 84, 101 to 121, 133 to 153, 180 to 200, 228 to 248, and 256 to 276; these read AVGIVTACFCFFLIPLLLVNI, FIWITLLILALAVGGFAYIDV, IFSFTFQTALPISIAIIWHVI, IFVVEYYAPIVFYVFNLMGFF, VLLAIAWVFACAMFIVYSFVY, and WVGMVIMMISILPRIVYQFLE. N-linked (GlcNAc...) asparagine glycans are attached at residues asparagine 283 and asparagine 286. Residues 291–311 form a helical membrane-spanning segment; that stretch reads AGLVFGLGFCPPLILAYTVCI. Residue asparagine 344 is glycosylated (N-linked (GlcNAc...) asparagine).

The protein localises to the membrane. This is an uncharacterized protein from Schizosaccharomyces pombe (strain 972 / ATCC 24843) (Fission yeast).